The chain runs to 950 residues: Protocadherin alpha-6 (950 aa).

An N-terminal signal peptide occupies residues 1–29 (MVFTPEDRLGKQCLLLPLLLLAAWKVGSG). The Extracellular segment spans residues 30–697 (QLHYSVPEEA…GPEAALVDVN (668 aa)). Cadherin domains lie at 34–133 (SVPE…PPLF), 157–242 (ASDA…APNF), 243–350 (EQSE…VPEI), 351–455 (ALTS…APAF), 456–565 (AQPE…APAL), and 581–678 (VPRS…APKA). 4 N-linked (GlcNAc...) asparagine glycosylation sites follow: asparagine 257, asparagine 265, asparagine 386, and asparagine 548. Residues 698–718 (VYLIIAICAVSSLLVLTLLLY) form a helical membrane-spanning segment. Topologically, residues 719–950 (TALRCSAPST…GNSTTDNSDQ (232 aa)) are cytoplasmic. PXXP repeat units lie at residues 799-802 (PRQP), 832-835 (PGGP), 873-876 (PGNP), and 891-894 (PGSP). A 4 X 4 AA repeats of P-X-X-P region spans residues 799 to 894 (PRQPNPDWRY…PDKFIIPGSP (96 aa)). Positions 830–889 (AGPGGPDQQWPTVSSATPEPEAGEVSPPVGAGVNSNSWTFKYGPGNPKQSGPGELPDKFI) are disordered. The segment at 901 to 950 (QEPANSQIDKSDFITFGKKEETKKKKKKKKGNKTQEKKEKGNSTTDNSDQ) is disordered. Residues 909–923 (DKSDFITFGKKEETK) are compositionally biased toward basic and acidic residues.

It is found in the cell membrane. Its function is as follows. Potential calcium-dependent cell-adhesion protein. May be involved in the establishment and maintenance of specific neuronal connections in the brain. The polypeptide is Protocadherin alpha-6 (PCDHA6) (Pan troglodytes (Chimpanzee)).